Reading from the N-terminus, the 360-residue chain is Protein Wnt-2 (360 aa).

The first 25 residues, 1 to 25 (MNAPLGGIWLGLPLLLTWLSPEVSS), serve as a signal peptide directing secretion. 11 disulfide bridges follow: Cys-76/Cys-87, Cys-127/Cys-135, Cys-137/Cys-157, Cys-206/Cys-220, Cys-208/Cys-215, Cys-278/Cys-309, Cys-294/Cys-304, Cys-308/Cys-348, Cys-324/Cys-339, Cys-326/Cys-336, and Cys-331/Cys-332. Ser-212 is lipidated: O-palmitoleoyl serine; by PORCN. Residue Asn-295 is glycosylated (N-linked (GlcNAc...) asparagine).

It belongs to the Wnt family. Palmitoleoylation is required for efficient binding to frizzled receptors. Depalmitoleoylation leads to Wnt signaling pathway inhibition.

It is found in the secreted. The protein localises to the extracellular space. It localises to the extracellular matrix. Its function is as follows. Ligand for members of the frizzled family of seven transmembrane receptors. Probable developmental protein. May be a signaling molecule which affects the development of discrete regions of tissues. Is likely to signal over only few cell diameters. This is Protein Wnt-2 (WNT2) from Oryctolagus cuniculus (Rabbit).